The sequence spans 264 residues: Regulatory protein RecX (264 aa).

This sequence belongs to the RecX family.

It is found in the cytoplasm. Its function is as follows. Modulates RecA activity. This Limosilactobacillus reuteri (strain DSM 20016) (Lactobacillus reuteri) protein is Regulatory protein RecX.